The following is a 137-amino-acid chain: 6,7-dimethyl-8-ribityllumazine synthase (137 aa).

Residues Phe11, 43–45 (SFD), and 67–69 (CVI) contribute to the 5-amino-6-(D-ribitylamino)uracil site. 72-73 (DT) is a binding site for (2S)-2-hydroxy-3-oxobutyl phosphate. The active-site Proton donor is His75. Leu100 is a binding site for 5-amino-6-(D-ribitylamino)uracil. Residue Arg115 participates in (2S)-2-hydroxy-3-oxobutyl phosphate binding.

This sequence belongs to the DMRL synthase family. Forms an icosahedral capsid composed of 60 subunits, arranged as a dodecamer of pentamers.

The catalysed reaction is (2S)-2-hydroxy-3-oxobutyl phosphate + 5-amino-6-(D-ribitylamino)uracil = 6,7-dimethyl-8-(1-D-ribityl)lumazine + phosphate + 2 H2O + H(+). The protein operates within cofactor biosynthesis; riboflavin biosynthesis; riboflavin from 2-hydroxy-3-oxobutyl phosphate and 5-amino-6-(D-ribitylamino)uracil: step 1/2. In terms of biological role, catalyzes the formation of 6,7-dimethyl-8-ribityllumazine by condensation of 5-amino-6-(D-ribitylamino)uracil with 3,4-dihydroxy-2-butanone 4-phosphate. This is the penultimate step in the biosynthesis of riboflavin. This Methanococcus maripaludis (strain C6 / ATCC BAA-1332) protein is 6,7-dimethyl-8-ribityllumazine synthase.